The following is a 386-amino-acid chain: Alanine racemase (386 aa).

The Proton acceptor; specific for D-alanine role is filled by Lys48. Lys48 is modified (N6-(pyridoxal phosphate)lysine). Substrate is bound at residue Arg147. Tyr279 functions as the Proton acceptor; specific for L-alanine in the catalytic mechanism. Substrate is bound at residue Met327.

This sequence belongs to the alanine racemase family. Pyridoxal 5'-phosphate is required as a cofactor.

The catalysed reaction is L-alanine = D-alanine. Its pathway is amino-acid biosynthesis; D-alanine biosynthesis; D-alanine from L-alanine: step 1/1. Its function is as follows. Catalyzes the interconversion of L-alanine and D-alanine. May also act on other amino acids. This is Alanine racemase (alr) from Prochlorococcus marinus (strain SARG / CCMP1375 / SS120).